We begin with the raw amino-acid sequence, 65 residues long: Peptide ToAcP (65 aa).

Positions 1-24 (MKMKMIVVISILLIVFSLSSKAMS) are cleaved as a signal peptide. The propeptide occupies 25-34 (LEDEQESVQR). At A58 the chain carries Alanine amide. Residues 59–65 (GRFDPAV) constitute a propeptide that is removed on maturation.

As to expression, expressed by the venom gland.

It localises to the secreted. Its function is as follows. Helical wheel projections predict no hydrophobic face, suggesting a non-amphipathic peptide. Does not show antifungal activity. This chain is Peptide ToAcP, found in Tityus obscurus (Amazonian scorpion).